A 78-amino-acid polypeptide reads, in one-letter code: Large ribosomal subunit protein bL28 (78 aa).

This sequence belongs to the bacterial ribosomal protein bL28 family.

The sequence is that of Large ribosomal subunit protein bL28 from Marinobacter nauticus (strain ATCC 700491 / DSM 11845 / VT8) (Marinobacter aquaeolei).